The chain runs to 491 residues: Sucrose transport protein SUC9 (491 aa).

Over residues 1–12 (MSDIQAKEDAAP) the composition is skewed to basic and acidic residues. The disordered stretch occupies residues 1–26 (MSDIQAKEDAAPVDRQSSSSVVVPDE). The Cytoplasmic portion of the chain corresponds to 1 to 33 (MSDIQAKEDAAPVDRQSSSSVVVPDEPSPLRKM). At S17 the chain carries Phosphoserine. The chain crosses the membrane as a helical span at residues 34–54 (ISVASIAAGIQFGWALQLSLL). At 55 to 68 (TPYVQLLGVPHKWS) the chain is on the extracellular side. Residues 69 to 89 (SFIWLCGPISGLLVQPTVGYF) traverse the membrane as a helical segment. The Cytoplasmic segment spans residues 90-101 (SDRCKSRFGRRR). A helical transmembrane segment spans residues 102 to 122 (PFIATGALLVALAVILIGFAA). Topologically, residues 123 to 139 (DFGHTMGDKLDEAVKIR) are extracellular. The helical transmembrane segment at 140–160 (AVGFFVVGFWILDVANNTLQG) threads the bilayer. Over 161 to 181 (PCRAFLGDLAAGDAKKTRTAN) the chain is Cytoplasmic. The chain crosses the membrane as a helical span at residues 182 to 202 (AIFSFFMAVGNVLGYAAGSYT). At 203 to 224 (NLHKIFPFTVTKACDIYCANLK) the chain is on the extracellular side. The helical transmembrane segment at 225–245 (SCFIISITLLIVLTIIALWYV) threads the bilayer. Topologically, residues 246–277 (EDKQWSPNADSDNEKTPFFGEIFGAFKVMKRP) are cytoplasmic. A helical transmembrane segment spans residues 278-298 (MWMLLAVTALNWIAWFPFLLY). Over 299 to 329 (DTDWMGREVYGGDSAGDDKMKKLYNHGIQVG) the chain is Extracellular. Residues 330 to 350 (SLGLMLNSIVLGVMSLVIGVI) traverse the membrane as a helical segment. At 351 to 358 (SKKIGAKR) the chain is on the cytoplasmic side. The chain crosses the membrane as a helical span at residues 359–379 (LWGAVNIILAVCLAMTVLVTK). Residues 380 to 406 (KAEEHRKIAGRMALPTNAIRDGALSLF) lie on the Extracellular side of the membrane. The chain crosses the membrane as a helical span at residues 407 to 427 (AILGIPLAITFSIPFALASII). Over 428-443 (SSSSGAGQGLSLGVLN) the chain is Cytoplasmic. The chain crosses the membrane as a helical span at residues 444–464 (MAIVIPQMIVSFGVGPIDALF). The Extracellular segment spans residues 465–468 (GGGN). Residues 469–489 (LPGFVVGAIAALISSVVALTV) form a helical membrane-spanning segment. Residues 490 to 491 (LP) are Cytoplasmic-facing.

The protein belongs to the glycoside-pentoside-hexuronide (GPH) cation symporter transporter (TC 2.A.2.4) family. As to expression, widely expressed.

It localises to the cell membrane. It carries out the reaction sucrose(out) + H(+)(out) = sucrose(in) + H(+)(in). It participates in glycan biosynthesis; sucrose metabolism. With respect to regulation, inhibited by protonophores (e.g. carbonyl cyanide m-chlorophenyl-hydrazone (CCCP)) and SH group inhibitors (e.g. p-chloromercuribenzene sulphonic acid (PCMBS)). In terms of biological role, high-affinity sucrose transporter. Responsible for the transport of sucrose into the cell, with the concomitant uptake of protons (symport system). Can also transport a wide range of glucosides, such as helicin, salicin, arbutin, maltose, fraxin, esculin, uranose, alpha-methylglucoside, alpha-phenylglucoside and beta-phenylglucoside. Plays a role in flowering time transition delay. This Arabidopsis thaliana (Mouse-ear cress) protein is Sucrose transport protein SUC9.